A 380-amino-acid chain; its full sequence is Maintenance of mitochondrial morphology protein 1 (380 aa).

The Lumenal portion of the chain corresponds to 1 to 64; that stretch reads MQGRAIWAEG…IVPSLSFIQG (64 aa). The helical transmembrane segment at 65 to 85 threads the bilayer; that stretch reads FMAGQAVLLMLFLGLFRYFFM. Residues 86 to 380 are Cytoplasmic-facing; that stretch reads TSSPGTRAQQ…IGTSPADPLA (295 aa). The SMP-LTD domain occupies 147-369; the sequence is APESLDWLNV…WPHFWHIPLP (223 aa).

The protein belongs to the MMM1 family. As to quaternary structure, homodimer. Component of the ER-mitochondria encounter structure (ERMES) or MDM complex, composed of MMM1, MDM10, MDM12 and MDM34. An MMM1 homodimer associates with one molecule of MDM12 on each side in a pairwise head-to-tail manner, and the SMP-LTD domains of MMM1 and MDM12 generate a continuous hydrophobic tunnel for phospholipid trafficking.

The protein localises to the endoplasmic reticulum membrane. Component of the ERMES/MDM complex, which serves as a molecular tether to connect the endoplasmic reticulum (ER) and mitochondria. Components of this complex are involved in the control of mitochondrial shape and protein biogenesis, and function in nonvesicular lipid trafficking between the ER and mitochondria. The MDM12-MMM1 subcomplex functions in the major beta-barrel assembly pathway that is responsible for biogenesis of all outer membrane beta-barrel proteins, and acts in a late step after the SAM complex. The MDM10-MDM12-MMM1 subcomplex further acts in the TOM40-specific pathway after the action of the MDM12-MMM1 complex. Essential for establishing and maintaining the structure of mitochondria and maintenance of mtDNA nucleoids. This is Maintenance of mitochondrial morphology protein 1 from Malassezia globosa (strain ATCC MYA-4612 / CBS 7966) (Dandruff-associated fungus).